Consider the following 682-residue polypeptide: Potassium-transporting ATPase ATP-binding subunit (682 aa).

4 helical membrane passes run 34 to 54 (PVMF…IAMA), 62 to 82 (ALFS…ANFA), 219 to 239 (IALT…TATL), and 254 to 274 (VLVA…LSAI). Asp307 acts as the 4-aspartylphosphate intermediate in catalysis. ATP-binding positions include Asp344, Glu348, 377-384 (FTAQSRMS), and Lys395. The Mg(2+) site is built by Asp518 and Asp522. The next 3 membrane-spanning stretches (helical) occupy residues 588 to 608 (FAII…LNIM), 616 to 636 (AILS…PLAL), and 656 to 676 (IYGL…DLLL).

The protein belongs to the cation transport ATPase (P-type) (TC 3.A.3) family. Type IA subfamily. The system is composed of three essential subunits: KdpA, KdpB and KdpC.

The protein resides in the cell inner membrane. It carries out the reaction K(+)(out) + ATP + H2O = K(+)(in) + ADP + phosphate + H(+). Functionally, part of the high-affinity ATP-driven potassium transport (or Kdp) system, which catalyzes the hydrolysis of ATP coupled with the electrogenic transport of potassium into the cytoplasm. This subunit is responsible for energy coupling to the transport system and for the release of the potassium ions to the cytoplasm. The chain is Potassium-transporting ATPase ATP-binding subunit from Escherichia coli O17:K52:H18 (strain UMN026 / ExPEC).